A 590-amino-acid polypeptide reads, in one-letter code: Potassium-transporting ATPase potassium-binding subunit (590 aa).

4 consecutive transmembrane segments (helical) span residues 3-23 (AFLL…RPLG), 63-83 (HYAL…YALQ), 134-154 (GLAV…IALI), and 177-197 (LYVL…QGAI). The tract at residues 217-244 (PKTDAQGNPIKDAQGNPVTEKATTQKQT) is disordered. The next 8 helical transmembrane spans lie at 284–304 (FVQM…FGAM), 312–332 (WAVL…EMWA), 359–379 (FGVV…CGAV), 388–408 (ALGG…FGGV), 411–431 (GLYG…LMIG), 450–470 (SIAI…AVLA), 515–535 (VALG…VLAM), and 558–578 (LFVV…YIPA).

It belongs to the KdpA family. As to quaternary structure, the system is composed of three essential subunits: KdpA, KdpB and KdpC.

It is found in the cell inner membrane. Its function is as follows. Part of the high-affinity ATP-driven potassium transport (or Kdp) system, which catalyzes the hydrolysis of ATP coupled with the electrogenic transport of potassium into the cytoplasm. This subunit binds the periplasmic potassium ions and delivers the ions to the membrane domain of KdpB through an intramembrane tunnel. This Ralstonia nicotianae (strain ATCC BAA-1114 / GMI1000) (Ralstonia solanacearum) protein is Potassium-transporting ATPase potassium-binding subunit.